A 528-amino-acid polypeptide reads, in one-letter code: Na(+)/H(+) antiporter NhaB (528 aa).

At 1-23 (MPISLGNAFIKNFLGKAPDWYKV) the chain is on the cytoplasmic side. A helical membrane pass occupies residues 24-46 (AIIAFLIINPIVFFLINPFVAGW). At 47 to 95 (LLVAEFIFTLAMALKCYPLQPGGLLAIEAIAIGMTSPAQVKHELVANIE) the chain is on the periplasmic side. Residues 96–118 (VLLLLVFMVAGIYFMKHLLLFIF) traverse the membrane as a helical segment. At 119–129 (TKILLGIRSKT) the chain is on the cytoplasmic side. The chain crosses the membrane as a helical span at residues 130–163 (LLSLAFCFAAAFLSAFLDALTVIAVVISVAIGFY). Topologically, residues 164–239 (SIYHKVASGN…ADQAGWLFGE (76 aa)) are periplasmic. A helical transmembrane segment spans residues 240-262 (FLIRMSPVTLPVFFCGLITCALV). Residues 263–297 (EKLKVFGYGAKLPNNVRQILVDFDNEERKTRTNQD) are Cytoplasmic-facing. A helical membrane pass occupies residues 298–317 (VAKLWVQGLIAVWLIVALAL). The Periplasmic portion of the chain corresponds to 318-320 (HLA). A helical membrane pass occupies residues 321–340 (AVGLIGLSVIILATAFTGVI). Residues 341–352 (EEHSMGKAFEEA) are Cytoplasmic-facing. Residues 353–375 (LPFTALLAVFFSIVAVIIDQELF) traverse the membrane as a helical segment. At 376 to 389 (KPVIDAVLAVEDKG) the chain is on the periplasmic side. A helical membrane pass occupies residues 390–412 (TQLALFYVANGLLSMVSDNVFVG). The Cytoplasmic portion of the chain corresponds to 413–477 (TVYINEVKTA…PLIRLSYGRM (65 aa)). Residues 478–500 (VIMALPYTIVLAIVGLMGIMFFL) form a helical membrane-spanning segment. Residues 501–528 (EPATASFYDAGWILPHSGDLTPVVSGGH) lie on the Periplasmic side of the membrane.

It belongs to the NhaB Na(+)/H(+) (TC 2.A.34) antiporter family.

The protein localises to the cell inner membrane. The catalysed reaction is 2 Na(+)(in) + 3 H(+)(out) = 2 Na(+)(out) + 3 H(+)(in). Na(+)/H(+) antiporter that extrudes sodium in exchange for external protons. The sequence is that of Na(+)/H(+) antiporter NhaB from Vibrio alginolyticus.